The primary structure comprises 198 residues: Recombination protein RecR (198 aa).

The segment at 57 to 72 (CSVCCNLTDQDPCQIC) adopts a C4-type zinc-finger fold. A Toprim domain is found at 80 to 175 (STICVVQEPR…KVTRIARGLP (96 aa)).

This sequence belongs to the RecR family.

Functionally, may play a role in DNA repair. It seems to be involved in an RecBC-independent recombinational process of DNA repair. It may act with RecF and RecO. This Symbiobacterium thermophilum (strain DSM 24528 / JCM 14929 / IAM 14863 / T) protein is Recombination protein RecR.